Reading from the N-terminus, the 336-residue chain is Terephthalate 1,2-dioxygenase, reductase component 1 (336 aa).

The region spanning 3-91 (HQIHIHDSDI…DIRIQPSSFR (89 aa)) is the 2Fe-2S ferredoxin-type domain. [2Fe-2S] cluster-binding residues include Cys-37, Cys-42, Cys-45, and Cys-75. In terms of domain architecture, FAD-binding FR-type spans 98-197 (RKRFTAKVYS…ELPFGSIALK (100 aa)).

Monomer. Part of a multicomponent enzyme system composed of a reductase (TphA1I or TphA1II) and a two-subunit oxygenase component (TphA2I or TphA2II and TphA3I or TphA3II). The cofactor is FAD. Requires [2Fe-2S] cluster as cofactor.

The catalysed reaction is terephthalate + NADH + O2 + H(+) = (3S,4R)-3,4-dihydroxycyclohexa-1,5-diene-1,4-dicarboxylate + NAD(+). Component of the terephthalate 1,2-dioxygenase multicomponent enzyme system which catalyzes the dioxygenation of terephthalate (TER/TPA) to 1,2-dihydroxy-3,5-cyclohexadiene-1,4-dicarboxylic acid (DCD). TphA1 probably reduces TphA2A3. It can also use 2,5-dicarboxypyridine (PDC) and 1,4-napthalenedicarboxylic acid (NDC) as substrates, and preferentially uses NADPH which is the physiological electron donor. In Comamonas sp, this protein is Terephthalate 1,2-dioxygenase, reductase component 1 (tphA1I).